Here is a 156-residue protein sequence, read N- to C-terminus: ATP synthase subunit b (156 aa).

The chain crosses the membrane as a helical span at residues leucine 7–isoleucine 29.

This sequence belongs to the ATPase B chain family. In terms of assembly, F-type ATPases have 2 components, F(1) - the catalytic core - and F(0) - the membrane proton channel. F(1) has five subunits: alpha(3), beta(3), gamma(1), delta(1), epsilon(1). F(0) has three main subunits: a(1), b(2) and c(10-14). The alpha and beta chains form an alternating ring which encloses part of the gamma chain. F(1) is attached to F(0) by a central stalk formed by the gamma and epsilon chains, while a peripheral stalk is formed by the delta and b chains.

Its subcellular location is the cell inner membrane. F(1)F(0) ATP synthase produces ATP from ADP in the presence of a proton or sodium gradient. F-type ATPases consist of two structural domains, F(1) containing the extramembraneous catalytic core and F(0) containing the membrane proton channel, linked together by a central stalk and a peripheral stalk. During catalysis, ATP synthesis in the catalytic domain of F(1) is coupled via a rotary mechanism of the central stalk subunits to proton translocation. Its function is as follows. Component of the F(0) channel, it forms part of the peripheral stalk, linking F(1) to F(0). The sequence is that of ATP synthase subunit b from Aliivibrio salmonicida (strain LFI1238) (Vibrio salmonicida (strain LFI1238)).